The following is a 197-amino-acid chain: Fucoxanthin-chlorophyll a-c binding protein C, chloroplastic (197 aa).

The N-terminal 31 residues, 1–31 (MKTAVIASLIAGAAAFAPAKNAARTSVATNM), are a transit peptide targeting the chloroplast. Helical transmembrane passes span 73-94 (ISML…PGTI), 113-133 (IPAG…SSVM), and 174-196 (GRAA…SLLP).

This sequence belongs to the fucoxanthin chlorophyll protein family. As to quaternary structure, the LHC complex of chromophytic algae is composed of fucoxanthin, chlorophyll A and C bound non-covalently by fucoxanthin chlorophyll proteins (FCPs). The ratio of the pigments in LHC; fucoxanthin: chlorophyll C: chlorophyll A; (0.6-1): (0.1-0.3): (1).

It localises to the plastid. The protein resides in the chloroplast thylakoid membrane. In terms of biological role, the light-harvesting complex (LHC) functions as a light receptor, it captures and delivers excitation energy to photosystems with which it is closely associated. Energy is transferred from the carotenoid and chlorophyll C (or B) to chlorophyll A and the photosynthetic reaction centers where it is used to synthesize ATP and reducing power. In Phaeodactylum tricornutum (Diatom), this protein is Fucoxanthin-chlorophyll a-c binding protein C, chloroplastic (FCPC).